A 33-amino-acid chain; its full sequence is Rugosin-B (33 aa).

A disulfide bridge links cysteine 27 with cysteine 33.

This sequence belongs to the frog skin active peptide (FSAP) family. Brevinin subfamily. As to expression, expressed by the skin glands.

It is found in the secreted. Its function is as follows. Shows antibacterial activity against both Gram-negative and Gram-positive bacteria. This chain is Rugosin-B, found in Glandirana rugosa (Japanese wrinkled frog).